The following is a 380-amino-acid chain: uncharacterized protein (380 aa).

2 disordered regions span residues A278–A323 and S345–R368. Residues R301–A319 show a composition bias toward basic residues.

This is an uncharacterized protein from Mycobacterium tuberculosis (strain CDC 1551 / Oshkosh).